The primary structure comprises 234 residues: UPF0173 metal-dependent hydrolase Smed_0942 (234 aa).

It belongs to the UPF0173 family.

In Sinorhizobium medicae (strain WSM419) (Ensifer medicae), this protein is UPF0173 metal-dependent hydrolase Smed_0942.